The following is a 63-amino-acid chain: MAKRCEVCGKGVVSGVQYSHSHRQSKRRWAPNIKSVRAVVNGVPKKVSVCTRCLRSGKVQRAI.

It belongs to the bacterial ribosomal protein bL28 family.

The chain is Large ribosomal subunit protein bL28 from Clostridium novyi (strain NT).